The primary structure comprises 760 residues: Catalase-peroxidase (760 aa).

Positions 1-24 (MAESKCPFKSQGSRSNVAGGGTRN) are disordered. The segment at residues 96–242 (WHSAGTYRVF…LAAAHMGLIY (147 aa)) is a cross-link (tryptophyl-tyrosyl-methioninium (Trp-Tyr) (with M-268)). His97 functions as the Proton acceptor in the catalytic mechanism. Residues 242 to 268 (YVNPEGPDGNPDPVAAAHDIRVTFGRM) constitute a cross-link (tryptophyl-tyrosyl-methioninium (Tyr-Met) (with W-96)). His283 is a heme b binding site.

It belongs to the peroxidase family. Peroxidase/catalase subfamily. As to quaternary structure, homodimer or homotetramer. Heme b is required as a cofactor. Post-translationally, formation of the three residue Trp-Tyr-Met cross-link is important for the catalase, but not the peroxidase activity of the enzyme.

The protein localises to the cytoplasm. It catalyses the reaction H2O2 + AH2 = A + 2 H2O. The catalysed reaction is 2 H2O2 = O2 + 2 H2O. Its function is as follows. Bifunctional enzyme with both catalase and broad-spectrum peroxidase activity. The protein is Catalase-peroxidase of Aspergillus clavatus (strain ATCC 1007 / CBS 513.65 / DSM 816 / NCTC 3887 / NRRL 1 / QM 1276 / 107).